The chain runs to 422 residues: Enolase (422 aa).

Gln161 contacts (2R)-2-phosphoglycerate. The active-site Proton donor is Glu203. Asp240, Glu283, and Asp310 together coordinate Mg(2+). Residues Lys335, Arg364, Ser365, and Lys386 each coordinate (2R)-2-phosphoglycerate. Residue Lys335 is the Proton acceptor of the active site.

Belongs to the enolase family. Mg(2+) serves as cofactor.

The protein localises to the cytoplasm. The protein resides in the secreted. Its subcellular location is the cell surface. It catalyses the reaction (2R)-2-phosphoglycerate = phosphoenolpyruvate + H2O. It participates in carbohydrate degradation; glycolysis; pyruvate from D-glyceraldehyde 3-phosphate: step 4/5. Catalyzes the reversible conversion of 2-phosphoglycerate (2-PG) into phosphoenolpyruvate (PEP). It is essential for the degradation of carbohydrates via glycolysis. The protein is Enolase of Deinococcus radiodurans (strain ATCC 13939 / DSM 20539 / JCM 16871 / CCUG 27074 / LMG 4051 / NBRC 15346 / NCIMB 9279 / VKM B-1422 / R1).